A 25-amino-acid polypeptide reads, in one-letter code: Large ribosomal subunit protein uL30 (25 aa).

It belongs to the universal ribosomal protein uL30 family. Part of the 50S ribosomal subunit.

The polypeptide is Large ribosomal subunit protein uL30 (rpmD) (Pseudomonas putida (Arthrobacter siderocapsulatus)).